A 445-amino-acid polypeptide reads, in one-letter code: MTFQNKKILVAGLGGTGISMIAYLRKNGAEVAAYDAELKPERVSQIGKMFDGLVFYTGRLKDALDNGFDILALSPGISERQPDIEAFKQNGGRVLGDIELLADIVNRRDDKVIAITGSNGKTTVTSLVGYLCIKCGLDTVIAGNIGTPVLEAEWQREGKKADVWVLELSSFQLENTESLRPTAATVLNISEDHLDRYDDLLDYAHTKAKIFRGDGVQVLNADDAFCRAMKRAGREVKWFSLEHEADFWLERETGRLKQGNEDLIVTQDIPLQGLHNAANVMAAVALCEAIGLSREALLEHVKTFQGLPHRVEKIGEKNGVVFIDDSKGTNVGATAAAIAGLQNPLFVILGGMGKGQDFTPLRDALVGKAKGVFLIGVDAPQIRRDLDGCGLNMTDCATLGEAVQTAYAQAEAGDIVLLSPACASFDMFKGYAHRSEVFIEAFKAL.

117–123 (GSNGKTT) lines the ATP pocket.

Belongs to the MurCDEF family.

Its subcellular location is the cytoplasm. It carries out the reaction UDP-N-acetyl-alpha-D-muramoyl-L-alanine + D-glutamate + ATP = UDP-N-acetyl-alpha-D-muramoyl-L-alanyl-D-glutamate + ADP + phosphate + H(+). It participates in cell wall biogenesis; peptidoglycan biosynthesis. Its function is as follows. Cell wall formation. Catalyzes the addition of glutamate to the nucleotide precursor UDP-N-acetylmuramoyl-L-alanine (UMA). This chain is UDP-N-acetylmuramoylalanine--D-glutamate ligase, found in Neisseria meningitidis serogroup B (strain ATCC BAA-335 / MC58).